Consider the following 241-residue polypeptide: MELATESIEGVLLVDKPQGRTSFSLIRSLVRLIGVKKIGHAGTLDPFATGVMVMLIGRKFTRLSDIMLFEDKEYAAVAHLGTTTDTYDCDGKIVGRSKKVPTMDEVLTCTSYFQGEIQQVPPMFSAKKVQGKKLYEYARQGLSIERRFATVTVNLRLVKYEYPRLHFVVQCSKGTYIRSIAHELGNMLGCGAYLEELRRLRSGSFSIDQCIDGNLLDEPEFNVSPYLRDANGLILQPAPVL.

Catalysis depends on D45, which acts as the Nucleophile.

Belongs to the pseudouridine synthase TruB family. Type 1 subfamily.

The enzyme catalyses uridine(55) in tRNA = pseudouridine(55) in tRNA. Its function is as follows. Responsible for synthesis of pseudouridine from uracil-55 in the psi GC loop of transfer RNAs. The chain is tRNA pseudouridine synthase B from Chlamydia trachomatis serovar L2 (strain ATCC VR-902B / DSM 19102 / 434/Bu).